The following is a 513-amino-acid chain: ATP synthase subunit alpha (513 aa).

Residue 169–176 coordinates ATP; it reads GDRQTGKT.

Belongs to the ATPase alpha/beta chains family. In terms of assembly, F-type ATPases have 2 components, CF(1) - the catalytic core - and CF(0) - the membrane proton channel. CF(1) has five subunits: alpha(3), beta(3), gamma(1), delta(1), epsilon(1). CF(0) has three main subunits: a(1), b(2) and c(9-12). The alpha and beta chains form an alternating ring which encloses part of the gamma chain. CF(1) is attached to CF(0) by a central stalk formed by the gamma and epsilon chains, while a peripheral stalk is formed by the delta and b chains.

The protein resides in the cell inner membrane. The enzyme catalyses ATP + H2O + 4 H(+)(in) = ADP + phosphate + 5 H(+)(out). Functionally, produces ATP from ADP in the presence of a proton gradient across the membrane. The alpha chain is a regulatory subunit. In Vibrio cholerae serotype O1 (strain ATCC 39541 / Classical Ogawa 395 / O395), this protein is ATP synthase subunit alpha.